We begin with the raw amino-acid sequence, 62 residues long: Large ribosomal subunit protein bL28 (62 aa).

This sequence belongs to the bacterial ribosomal protein bL28 family.

The polypeptide is Large ribosomal subunit protein bL28 (Streptococcus thermophilus (strain CNRZ 1066)).